The sequence spans 475 residues: Ribulose bisphosphate carboxylase large chain (475 aa).

A propeptide spanning residues 1-2 is cleaved from the precursor; that stretch reads MS. Pro-3 is modified (N-acetylproline). Lys-14 is modified (N6,N6,N6-trimethyllysine). Asn-123 and Thr-173 together coordinate substrate. Residue Lys-175 is the Proton acceptor of the active site. Lys-177 contributes to the substrate binding site. Mg(2+) is bound by residues Lys-201, Asp-203, and Glu-204. The residue at position 201 (Lys-201) is an N6-carboxylysine. Catalysis depends on His-294, which acts as the Proton acceptor. Residues Arg-295, His-327, and Ser-379 each coordinate substrate.

This sequence belongs to the RuBisCO large chain family. Type I subfamily. In terms of assembly, heterohexadecamer of 8 large chains and 8 small chains; disulfide-linked. The disulfide link is formed within the large subunit homodimers. Requires Mg(2+) as cofactor. In terms of processing, the disulfide bond which can form in the large chain dimeric partners within the hexadecamer appears to be associated with oxidative stress and protein turnover.

The protein resides in the plastid. It is found in the chloroplast. The catalysed reaction is 2 (2R)-3-phosphoglycerate + 2 H(+) = D-ribulose 1,5-bisphosphate + CO2 + H2O. It catalyses the reaction D-ribulose 1,5-bisphosphate + O2 = 2-phosphoglycolate + (2R)-3-phosphoglycerate + 2 H(+). RuBisCO catalyzes two reactions: the carboxylation of D-ribulose 1,5-bisphosphate, the primary event in carbon dioxide fixation, as well as the oxidative fragmentation of the pentose substrate in the photorespiration process. Both reactions occur simultaneously and in competition at the same active site. The sequence is that of Ribulose bisphosphate carboxylase large chain from Calycanthus floridus var. glaucus (Eastern sweetshrub).